Consider the following 175-residue polypeptide: NADH-ubiquinone oxidoreductase chain 6 (175 aa).

Helical transmembrane passes span 1–21, 27–47, 49–69, 88–108, and 149–169; these read MMTYIVFILSTVFVVGFVGFS, VYGGVGLIVSGGVGCGIIMNF, GSFLGLMVFLIYLGGMMVVFG, VVFGAFVFGLFMEMLLVLYVL, and YGMWLVVVTGWSLFIAVVVVM.

The protein belongs to the complex I subunit 6 family. As to quaternary structure, core subunit of respiratory chain NADH dehydrogenase (Complex I) which is composed of 45 different subunits.

It localises to the mitochondrion inner membrane. The enzyme catalyses a ubiquinone + NADH + 5 H(+)(in) = a ubiquinol + NAD(+) + 4 H(+)(out). In terms of biological role, core subunit of the mitochondrial membrane respiratory chain NADH dehydrogenase (Complex I) which catalyzes electron transfer from NADH through the respiratory chain, using ubiquinone as an electron acceptor. Essential for the catalytic activity and assembly of complex I. In Pteropus scapulatus (Little red flying fox), this protein is NADH-ubiquinone oxidoreductase chain 6 (MT-ND6).